We begin with the raw amino-acid sequence, 170 residues long: Cytochrome bc1 complex Rieske iron-sulfur subunit (170 aa).

A Rieske domain is found at 63 to 153; that stretch reads KAALMIIRLE…IGVNDEGYLE (91 aa). Residues cysteine 96, histidine 98, cysteine 115, and histidine 118 each contribute to the [2Fe-2S] cluster site. Cysteine 101 and cysteine 117 are oxidised to a cystine.

As to quaternary structure, the cytochrome bc1 complex is composed of a cytochrome b (QcrB), the Rieske iron-sulfur protein (QcrA) and a diheme cytochrome c (QcrC) subunit. [2Fe-2S] cluster serves as cofactor.

The protein resides in the cell membrane. Its function is as follows. Iron-sulfur subunit of the cytochrome bc1 complex, an essential component of the respiratory electron transport chain required for ATP synthesis. The bc1 complex catalyzes the oxidation of menaquinol and the reduction of cytochrome c in the respiratory chain. The bc1 complex operates through a Q-cycle mechanism that couples electron transfer to generation of the proton gradient that drives ATP synthesis. This Streptomyces lividans protein is Cytochrome bc1 complex Rieske iron-sulfur subunit (qcrA).